Consider the following 132-residue polypeptide: Small ribosomal subunit protein uS8 (132 aa).

This sequence belongs to the universal ribosomal protein uS8 family. In terms of assembly, part of the 30S ribosomal subunit. Contacts proteins S5 and S12.

Its function is as follows. One of the primary rRNA binding proteins, it binds directly to 16S rRNA central domain where it helps coordinate assembly of the platform of the 30S subunit. This chain is Small ribosomal subunit protein uS8, found in Psychrobacter sp. (strain PRwf-1).